Reading from the N-terminus, the 309-residue chain is D-alanine--D-alanine ligase (309 aa).

The ATP-grasp domain maps to 99-304; sequence KRVLLQAGIP…FPDLVQKIVD (206 aa). 132 to 187 contributes to the ATP binding site; that stretch reads LKELGLPVVIKAPTQGSTIGTFIVREEGELEPAIAGALKYDLSFMAEAYLAGPEIT. The Mg(2+) site is built by aspartate 258, glutamate 271, and asparagine 273.

Belongs to the D-alanine--D-alanine ligase family. The cofactor is Mg(2+). It depends on Mn(2+) as a cofactor.

It is found in the cytoplasm. The catalysed reaction is 2 D-alanine + ATP = D-alanyl-D-alanine + ADP + phosphate + H(+). The protein operates within cell wall biogenesis; peptidoglycan biosynthesis. Cell wall formation. The chain is D-alanine--D-alanine ligase from Moorella thermoacetica (strain ATCC 39073 / JCM 9320).